The following is a 269-amino-acid chain: uncharacterized protein (269 aa).

103-110 lines the ATP pocket; sequence GIFTMGKS.

This is an uncharacterized protein from Mycoplasma pneumoniae (strain ATCC 29342 / M129 / Subtype 1) (Mycoplasmoides pneumoniae).